We begin with the raw amino-acid sequence, 1352 residues long: Spike glycoprotein (1352 aa).

Positions 1-12 (MIRSVLVLMCSL) are cleaved as a signal peptide. At 13 to 1297 (TFIGNLTRGQ…GNYTFYQKWP (1285 aa)) the chain is on the extracellular side. In terms of domain architecture, BetaCoV S1-NTD spans 22–359 (QSVDMGHNGT…DDLAQLQCSY (338 aa)). Asn29, Asn73, Asn111, Asn132, Asn167, Asn174, Asn244, and Asn250 each carry an N-linked (GlcNAc...) asparagine; by host glycan. Cysteines 193 and 245 form a disulfide. 2 cysteine pairs are disulfide-bonded: Cys347–Cys357 and Cys391–Cys415. Residues 389–585 (QECDFTPMLT…GTDTNSVCPM (197 aa)) enclose the BetaCoV S1-CTD domain. Asn418 carries N-linked (GlcNAc...) asparagine; by host glycosylation. 2 cysteine pairs are disulfide-bonded: Cys433–Cys486 and Cys445–Cys583. N-linked (GlcNAc...) asparagine; by host glycans are attached at residues Asn495, Asn590, Asn617, Asn716, Asn760, Asn771, Asn782, and Asn867. Fusion peptide stretches follow at residues 885-906 (STIE…MQGY) and 904-926 (QGYD…AQYV). Cys909 and Cys922 are oxidised to a cystine. The tract at residues 991-1041 (QKIIANKFNQALGAMQTGFTTTNLAFNKVQDAVNANAMALSKLAAELSNTF) is heptad repeat 1. Positions 1020–1064 (QDAVNANAMALSKLAAELSNTFGAISSSISDILARLDTVEQEAQI) form a coiled coil. Asn1145, Asn1172, Asn1214, Asn1226, Asn1242, Asn1257, Asn1278, and Asn1289 each carry an N-linked (GlcNAc...) asparagine; by host glycan. Positions 1247-1286 (GPNFQEISKINTTLLNLNTELMVLSEVVKQLNESYIDLKE) are heptad repeat 2. Residues 1259–1287 (TLLNLNTELMVLSEVVKQLNESYIDLKEL) adopt a coiled-coil conformation. Residues 1298–1318 (WYIWLGFIAGLVALALCVFFI) traverse the membrane as a helical segment. Residues 1319–1352 (LCCTGCGTSCLGKLKCNRCCDSYDEYEVEKIHVH) are Cytoplasmic-facing. Positions 1350–1352 (HVH) match the KxHxx motif.

This sequence belongs to the betacoronaviruses spike protein family. In terms of assembly, homotrimer; each monomer consists of a S1 and a S2 subunit. The resulting peplomers protrude from the virus surface as spikes. In terms of processing, specific enzymatic cleavages in vivo yield mature proteins. The precursor is processed into S1 and S2 by host cell furin or another cellular protease to yield the mature S1 and S2 proteins. Additionally, a second cleavage leads to the release of a fusion peptide after viral attachment to host cell receptor. Post-translationally, the cytoplasmic Cys-rich domain is palmitoylated. Spike glycoprotein is digested within host endosomes.

It localises to the virion membrane. The protein localises to the host endoplasmic reticulum-Golgi intermediate compartment membrane. Its subcellular location is the host cell membrane. In terms of biological role, attaches the virion to the cell membrane by interacting with host receptor, initiating the infection. Its function is as follows. Mediates fusion of the virion and cellular membranes by acting as a class I viral fusion protein. Under the current model, the protein has at least three conformational states: pre-fusion native state, pre-hairpin intermediate state, and post-fusion hairpin state. During viral and target cell membrane fusion, the coiled coil regions (heptad repeats) assume a trimer-of-hairpins structure, positioning the fusion peptide in close proximity to the C-terminal region of the ectodomain. The formation of this structure appears to drive apposition and subsequent fusion of viral and target cell membranes. Acts as a viral fusion peptide which is unmasked following S2 cleavage occurring upon virus endocytosis. The polypeptide is Spike glycoprotein (Bat coronavirus HKU5 (BtCoV)).